Consider the following 224-residue polypeptide: MSFAASLYEKAQPIWEAGYNHPFVQGIGDGSLEKSKFQFFMKQDYLYLIDYARLFALGTLKGNDLQTMSTFSKLLHATLNVEMDLHRAYAKRLGISAEELEAIEPAATTLAYTSYMLNVAQRGSLLDLIAAVLPCTWSYYEIGVKLKGIPGASDHPFYGEWIKLYASDEFKELADWLIQMLDEEAKGLSSKEKAKLETIFLTTSRLENEFWDMAYNERMWNYNG.

A substrate-binding site is contributed by D44. Residue C135 is the Nucleophile of the active site. Residues Y139 and Y165 each contribute to the substrate site. The Proton donor role is filled by E207.

This sequence belongs to the TenA family. In terms of assembly, homotetramer.

The catalysed reaction is 4-amino-5-aminomethyl-2-methylpyrimidine + H2O = 4-amino-5-hydroxymethyl-2-methylpyrimidine + NH4(+). It catalyses the reaction thiamine + H2O = 5-(2-hydroxyethyl)-4-methylthiazole + 4-amino-5-hydroxymethyl-2-methylpyrimidine + H(+). It functions in the pathway cofactor biosynthesis; thiamine diphosphate biosynthesis. Functionally, catalyzes an amino-pyrimidine hydrolysis reaction at the C5' of the pyrimidine moiety of thiamine compounds, a reaction that is part of a thiamine salvage pathway. Thus, catalyzes the conversion of 4-amino-5-aminomethyl-2-methylpyrimidine to 4-amino-5-hydroxymethyl-2-methylpyrimidine (HMP). To a lesser extent, is also able to catalyze the hydrolytic cleavage of thiamine; however, this thiaminase activity is unlikely to be physiologically relevant. Therefore, is involved in the regeneration of the thiamine pyrimidine from thiamine degraded products present in the environment, rather than in thiamine degradation. The protein is Aminopyrimidine aminohydrolase of Halalkalibacterium halodurans (strain ATCC BAA-125 / DSM 18197 / FERM 7344 / JCM 9153 / C-125) (Bacillus halodurans).